Consider the following 281-residue polypeptide: NAD-dependent protein deacetylase 1 (281 aa).

The Deacetylase sirtuin-type domain maps to 1–281 (MEEGAALEGV…FDQILDALDL (281 aa)). NAD(+)-binding positions include 24 to 44 (GAGV…GSLN) and 102 to 105 (QNVD). His-120 acts as the Proton acceptor in catalysis. Residues Cys-128, Cys-131, Cys-183, and Cys-186 each coordinate Zn(2+). NAD(+)-binding positions include 224–226 (GSS), 250–252 (NGG), and Val-268.

This sequence belongs to the sirtuin family. Class II subfamily. Zn(2+) serves as cofactor.

The protein resides in the cytoplasm. The catalysed reaction is N(6)-acetyl-L-lysyl-[protein] + NAD(+) + H2O = 2''-O-acetyl-ADP-D-ribose + nicotinamide + L-lysyl-[protein]. Functionally, NAD-dependent protein deacetylase which modulates the activities of several enzymes which are inactive in their acetylated form. This is NAD-dependent protein deacetylase 1 from Corynebacterium efficiens (strain DSM 44549 / YS-314 / AJ 12310 / JCM 11189 / NBRC 100395).